Here is an 859-residue protein sequence, read N- to C-terminus: Heterogeneous nuclear ribonucleoprotein U-like protein 1 (859 aa).

Positions 1 to 103 (MDVRRLKVNE…GPDGHYVMDN (103 aa)) are necessary for interaction with HRMT1L1. Residues 3–37 (VRRLKVNELREELQRRGLDTRGLKAELAERLLAAL) form the SAP domain. The segment at 36–131 (ALEAEEPEDE…SSYDRRPLDM (96 aa)) is disordered. Positions 38–54 (EAEEPEDERELEADDDP) are enriched in acidic residues. The segment covering 77-88 (QPPPPGLQPHPE) has biased composition (pro residues). Lys117 is covalently cross-linked (Glycyl lysine isopeptide (Lys-Gly) (interchain with G-Cter in SUMO1); alternate). A Glycyl lysine isopeptide (Lys-Gly) (interchain with G-Cter in SUMO2); alternate cross-link involves residue Lys117. Over residues 118–130 (QENESSYDRRPLD) the composition is skewed to basic and acidic residues. Lys143 participates in a covalent cross-link: Glycyl lysine isopeptide (Lys-Gly) (interchain with G-Cter in SUMO1); alternate. A Glycyl lysine isopeptide (Lys-Gly) (interchain with G-Cter in SUMO2); alternate cross-link involves residue Lys143. Residues 146-206 (MKQEAPPSFL…QPPAEEDEDD (61 aa)) form a disordered region. Glycyl lysine isopeptide (Lys-Gly) (interchain with G-Cter in SUMO2) cross-links involve residues Lys147 and Lys163. Positions 174 to 193 (RPFEENRGRGYFEHREDRRG) are enriched in basic and acidic residues. Residues 192 to 389 (RGRSPQPPAE…VEFNFGQRAE (198 aa)) enclose the B30.2/SPRY domain. Ser195 bears the Phosphoserine mark. Position 210 is a phosphothreonine (Thr210). The segment at 214–859 (IDTYNCDLHF…GSTQGGTSTQ (646 aa)) is necessary for interaction with TP53. Glycyl lysine isopeptide (Lys-Gly) (interchain with G-Cter in SUMO2) cross-links involve residues Lys271 and Lys450. Positions 457–595 (NAIMDKMRVM…EEADKLVRQY (139 aa)) are necessary for interaction with BRD7 and transcriptional activation. Residue Ser513 is modified to Phosphoserine. A Glycyl lysine isopeptide (Lys-Gly) (interchain with G-Cter in SUMO2) cross-link involves residue Lys540. Residues 595–612 (YNEEGRKAGPPPEKRFDS) show a composition bias toward basic and acidic residues. A disordered region spans residues 595-814 (YNEEGRKAGP…PPTAQTYPQP (220 aa)). 5 consecutive repeat copies span residues 613 to 615 (RGG), 620 to 622 (RGG), 639 to 641 (RGG), 645 to 647 (RGG), and 659 to 661 (RGG). Gly residues-rich tracts occupy residues 613 to 626 (RGGG…GGGF) and 634 to 670 (PPGG…GGGY). The 5 X 3 AA repeats of R-G-G stretch occupies residues 613-661 (RGGGFRGRGGGGGFQRYDNRGPPGGNRGGFQNRGGGGGSGGGGGNYRGG). The interval 613–661 (RGGGFRGRGGGGGFQRYDNRGPPGGNRGGFQNRGGGGGSGGGGGNYRGG) is necessary for transcription repression. At Arg639 the chain carries Asymmetric dimethylarginine. Arg645 and Arg659 each carry asymmetric dimethylarginine; alternate. 2 positions are modified to omega-N-methylarginine; alternate: Arg645 and Arg659. Omega-N-methylarginine is present on residues Arg664 and Arg674. The span at 671 to 696 (NQNRWGNNNRDNNNSNNRGNYNRAPQ) shows a compositional bias: low complexity. Residues 697-720 (QQPPPQQPPPPQPPPQQPPPPPSY) are compositionally biased toward pro residues. Ser721 is subject to Phosphoserine. Positions 728–744 (GASSYNKNSNIPGSSAN) are enriched in polar residues. The segment covering 745–775 (TSTPTVSSYTPPQPSYSQPPYNQGGYTQGYT) has biased composition (low complexity). Composition is skewed to pro residues over residues 776–786 (APPPPPPPPPA) and 796–807 (NPAPYTPPPPPT).

In terms of assembly, interacts with BRD7, PRMT2, TP53 and NXF1. Associates with histones and BRD7. In terms of processing, methylated.

The protein resides in the nucleus. Its function is as follows. Acts as a basic transcriptional regulator. Represses basic transcription driven by several virus and cellular promoters. When associated with BRD7, activates transcription of glucocorticoid-responsive promoter in the absence of ligand-stimulation. Also plays a role in mRNA processing and transport. Binds avidly to poly(G) and poly(C) RNA homopolymers in vitro. The polypeptide is Heterogeneous nuclear ribonucleoprotein U-like protein 1 (Hnrnpul1) (Mus musculus (Mouse)).